Consider the following 291-residue polypeptide: Tryptophan 2,3-dioxygenase (291 aa).

Residues 51 to 55, tyrosine 113, and arginine 117 each bind substrate; that span reads FIIQH. Histidine 240 lines the heme pocket. Position 254 (threonine 254) interacts with substrate.

This sequence belongs to the tryptophan 2,3-dioxygenase family. Homotetramer. Heme is required as a cofactor.

It catalyses the reaction L-tryptophan + O2 = N-formyl-L-kynurenine. Its pathway is amino-acid degradation; L-tryptophan degradation via kynurenine pathway; L-kynurenine from L-tryptophan: step 1/2. Its function is as follows. Heme-dependent dioxygenase that catalyzes the oxidative cleavage of the L-tryptophan (L-Trp) pyrrole ring and converts L-tryptophan to N-formyl-L-kynurenine. Catalyzes the oxidative cleavage of the indole moiety. The sequence is that of Tryptophan 2,3-dioxygenase from Myxococcus xanthus (strain DK1622).